The following is a 306-amino-acid chain: Anamorsin homolog (306 aa).

Over residues 1 to 25 (MVPPREDVTVRIVCERRRTAGKEAR) the composition is skewed to basic and acidic residues. Residues 1-51 (MVPPREDVTVRIVCERRRTAGKEARPPPSAKPTPGNTSSHPNAKETHRSNE) are disordered. Residues 59–190 (KQSHRRSIMA…RRNNTTNSVA (132 aa)) are N-terminal SAM-like domain. Residues 191 to 218 (TLNFASNNNNGNDLLIDEDNLLTDASNL) are linker. [2Fe-2S] cluster is bound by residues Cys-236, Cys-242, Cys-245, and Cys-247. The tract at residues 236 to 247 (CSGRAPCDDCTC) is fe-S binding site A. Basic and acidic residues predominate over residues 252–265 (GAKEGNSEQPKEIK). Residues 252–272 (GAKEGNSEQPKEIKSSSCGKC) form a disordered region. 4 residues coordinate [4Fe-4S] cluster: Cys-269, Cys-272, Cys-280, and Cys-283. 2 short sequence motifs (cx2C motif) span residues 269-272 (CGKC) and 280-283 (CASC). The segment at 269 to 283 (CGKCSLGDAFRCASC) is fe-S binding site B.

Belongs to the anamorsin family. As to quaternary structure, monomer. [2Fe-2S] cluster is required as a cofactor. The cofactor is [4Fe-4S] cluster.

It localises to the cytoplasm. The protein resides in the mitochondrion intermembrane space. Component of the cytosolic iron-sulfur (Fe-S) protein assembly (CIA) machinery. Required for the maturation of extramitochondrial Fe-S proteins. Part of an electron transfer chain functioning in an early step of cytosolic Fe-S biogenesis, facilitating the de novo assembly of a [4Fe-4S] cluster on the cytosolic Fe-S scaffold complex. Electrons are transferred from NADPH via a FAD- and FMN-containing diflavin oxidoreductase. Together with the diflavin oxidoreductase, also required for the assembly of the diferric tyrosyl radical cofactor of ribonucleotide reductase (RNR), probably by providing electrons for reduction during radical cofactor maturation in the catalytic small subunit. This Phaeodactylum tricornutum (strain CCAP 1055/1) protein is Anamorsin homolog.